A 1052-amino-acid polypeptide reads, in one-letter code: uncharacterized protein (1052 aa).

It belongs to the IIV-6 050L family.

This is an uncharacterized protein from Invertebrate iridescent virus 6 (IIV-6).